The sequence spans 1021 residues: 2-oxoglutarate dehydrogenase complex component E1 (1021 aa).

Residues 1 to 40 (MFNLRTCASKLRPLTASQTIRSLKHNRPAAPRTFQQFRCL) constitute a mitochondrion transit peptide. Ca(2+)-binding residues include His-142, Asp-155, and Asp-157. Thiamine diphosphate is bound by residues Arg-311, Asp-410, Asn-443, and Ile-445. Mg(2+)-binding residues include Asp-410, Asn-443, and Ile-445. Lys-533 is covalently cross-linked (Glycyl lysine isopeptide (Lys-Gly) (interchain with G-Cter in ubiquitin)). Gln-675 lines the thiamine diphosphate pocket.

Belongs to the alpha-ketoglutarate dehydrogenase family. In terms of assembly, homodimer. The 2-oxoglutarate dehydrogenase complex is composed of OGDH (2-oxoglutarate dehydrogenase; E1), DLST (dihydrolipoamide succinyltransferase; E2) and DLD (dihydrolipoamide dehydrogenase; E3). It contains multiple copies of the three enzymatic components (E1, E2 and E3). In the nucleus, the 2-oxoglutarate dehydrogenase complex associates with kat2a. Requires thiamine diphosphate as cofactor. It depends on Mg(2+) as a cofactor. As to expression, expressed in the brain.

It is found in the mitochondrion. Its subcellular location is the nucleus. It carries out the reaction N(6)-[(R)-lipoyl]-L-lysyl-[protein] + 2-oxoglutarate + H(+) = N(6)-[(R)-S(8)-succinyldihydrolipoyl]-L-lysyl-[protein] + CO2. With respect to regulation, calcium ions and ADP stimulate, whereas ATP and NADH reduce catalytic activity. Functionally, 2-oxoglutarate dehydrogenase (E1o) component of the 2-oxoglutarate dehydrogenase complex (OGDHC). Participates in the first step, rate limiting for the overall conversion of 2-oxoglutarate to succinyl-CoA and CO(2) catalyzed by the whole OGDHC. Catalyzes the irreversible decarboxylation of 2-oxoglutarate (alpha-ketoglutarate) via the thiamine diphosphate (ThDP) cofactor and subsequent transfer of the decarboxylated acyl intermediate on an oxidized dihydrolipoyl group that is covalently amidated to the E2 enzyme (dihydrolipoyllysine-residue succinyltransferase or DLST). Plays a key role in the Krebs (citric acid) cycle, which is a common pathway for oxidation of fuel molecules, including carbohydrates, fatty acids, and amino acids. Can catalyze the decarboxylation of 2-oxoadipate in vitro, but at a much lower rate than 2-oxoglutarate. Mainly active in the mitochondrion. A fraction of the 2-oxoglutarate dehydrogenase complex also localizes in the nucleus and is required for lysine succinylation of histones: associates with KAT2A on chromatin and provides succinyl-CoA to histone succinyltransferase KAT2A. In Xenopus laevis (African clawed frog), this protein is 2-oxoglutarate dehydrogenase complex component E1 (ogdh).